Here is a 119-residue protein sequence, read N- to C-terminus: Circadian clock oscillator protein KaiB (119 aa).

This sequence belongs to the KaiB family. In terms of assembly, may undergo a major conformational rearrangment; in the free state forms homooligomers. When bound to KaiC switches to a monomeric thioredoxin-fold (KaiB(fs)). The active oscillator complex is probably KaiC(6):KaiB(6).

Its function is as follows. Component of the KaiBC clock protein complex, which constitutes the main circadian regulator in cyanobacteria; it may modify the ATPase activity of KaiC. May be a metamorphic protein which reversibly switches between an inactive tetrameric fold and a rare, thioredoxin-like monomeric fold (KaiB(fs)). KaiB(fs) binds phospho-KaiC, and perhaps clock output effectors. The polypeptide is Circadian clock oscillator protein KaiB (Prochlorococcus marinus (strain MIT 9313)).